The primary structure comprises 714 residues: Polyribonucleotide nucleotidyltransferase (714 aa).

Mg(2+) is bound by residues Asp-484 and Asp-490. One can recognise a KH domain in the interval 551 to 610 (PRIMVINIAPEKVREVIGPGGKVINKIIDETGVKIDTEDDGKITVAGENTESAQRAIDMI). Positions 620–688 (GEKYLGRVTK…DQGKMTLSRK (69 aa)) constitute an S1 motif domain. A disordered region spans residues 685-714 (LSRKALLPKPERKEKKNFDKKSEDQNSEDK). The segment covering 693–714 (KPERKEKKNFDKKSEDQNSEDK) has biased composition (basic and acidic residues).

It belongs to the polyribonucleotide nucleotidyltransferase family. Mg(2+) serves as cofactor.

The protein localises to the cytoplasm. It catalyses the reaction RNA(n+1) + phosphate = RNA(n) + a ribonucleoside 5'-diphosphate. In terms of biological role, involved in mRNA degradation. Catalyzes the phosphorolysis of single-stranded polyribonucleotides processively in the 3'- to 5'-direction. The sequence is that of Polyribonucleotide nucleotidyltransferase from Finegoldia magna (strain ATCC 29328 / DSM 20472 / WAL 2508) (Peptostreptococcus magnus).